A 569-amino-acid polypeptide reads, in one-letter code: MAAVPPLRDRLSFLHRLPILLKGTSDDDIPCPGYLFEEIAKISHESLGSSQCLLEYLLNRLDSSSGHVKLKVLKILLYLCSHGSSSFMLILRRNSALIQEATAFAGPPDPLHGNSLYQKVRAAAQDLGSTLFSDALPQPPSQPPQILPPAGMGAQARPHSALQGFGYTKESSRTGSAGETFLSTIQRAAEVVVNAVRPGPDNPCTKGPLPHGDAYQPAVTPSASHTHPNPGNLLPAAIQGTRAVKHQPGQAGGGWDEMDSSPSSQNSSCTSNLSRASDSVSRSGSDSHSGASREPGDLAERAEGMAPNDCQQELNLVRTVTQGPRVFLSREETQHFIKECGLLNCEAVLELLLQQLVGTSECEQMRALCAIASFGSADLLPQEHILLLCRQQLQELGAGSPGPVTNKATKILRHLEASCGQQFPTLRPCAQPNSAAAVVGPADLLTSPVPPPGSQVFLQPLSSTAVVPRSPVPTPSPDTLPPALQDPGELRTQLVCSSEPGTGSEQRLENTDTPKDSSSPCPWSPNSLFAGMELVACTRLPCPSFQADLQKVTTEPPVSEPSAFAFLNM.

The 134-residue stretch at 8–141 (RDRLSFLHRL…FSDALPQPPS (134 aa)) folds into the ENTH domain. Positions 196–298 (VRPGPDNPCT…SGASREPGDL (103 aa)) are disordered. Positions 219–229 (VTPSASHTHPN) are enriched in polar residues. A compositionally biased stretch (low complexity) spans 260–292 (SSPSSQNSSCTSNLSRASDSVSRSGSDSHSGAS). The residue at position 400 (serine 400) is a Phosphoserine. Residues 467–524 (VPRSPVPTPSPDTLPPALQDPGELRTQLVCSSEPGTGSEQRLENTDTPKDSSSPCPWS) are disordered. Residues 470-480 (SPVPTPSPDTL) show a composition bias toward pro residues. The segment covering 494-505 (LVCSSEPGTGSE) has biased composition (polar residues). The span at 506–515 (QRLENTDTPK) shows a compositional bias: basic and acidic residues. The tract at residues 525–535 (PNSLFAGMELV) is interaction with AP4B1. Positions 559–569 (SEPSAFAFLNM) are interaction with AP4E1.

In terms of assembly, interacts with AP4B1 and AP4E1; the interaction is direct and mediates the association of TEPSIN with the adapter-like complex 4 (AP-4), a heterotetramer composed of AP4B1, AP4E1, AP4M1 and AP4S1.

The protein resides in the golgi apparatus. The protein localises to the trans-Golgi network membrane. It localises to the cytoplasmic vesicle. Its subcellular location is the cytoplasm. It is found in the cytosol. Functionally, associates with the adapter-like complex 4 (AP-4) and may therefore play a role in vesicular trafficking of proteins at the trans-Golgi network. The sequence is that of AP-4 complex accessory subunit Tepsin from Rattus norvegicus (Rat).